The following is a 214-amino-acid chain: Glucose-6-phosphate isomerase (214 aa).

H92, H94, E101, and H140 together coordinate Fe cation.

This sequence belongs to the archaeal-type GPI family. As to quaternary structure, homodimer.

The protein resides in the cytoplasm. It carries out the reaction alpha-D-glucose 6-phosphate = beta-D-fructose 6-phosphate. It functions in the pathway carbohydrate degradation; glycolysis; D-glyceraldehyde 3-phosphate and glycerone phosphate from D-glucose: step 2/4. This Sinorhizobium medicae (strain WSM419) (Ensifer medicae) protein is Glucose-6-phosphate isomerase.